A 428-amino-acid polypeptide reads, in one-letter code: Growth/differentiation factor 2 (428 aa).

The signal sequence occupies residues 1-22; it reads MSPGAFRVALLPLFLLVCVTQQ. A propeptide spanning residues 23 to 318 is cleaved from the precursor; it reads KPLQNWEQAS…VGPLLARRKR (296 aa). N-linked (GlcNAc...) asparagine glycans are attached at residues Asn70 and Asn135. A disulfide bond links Cys155 and Cys236. The N-linked (GlcNAc...) asparagine glycan is linked to Asn262. 3 disulfides stabilise this stretch: Cys326–Cys392, Cys355–Cys425, and Cys359–Cys427. Positions 401–415 are interaction with ENG; sequence SILYKDDMGVPTLKY.

The protein belongs to the TGF-beta family. In terms of assembly, homodimer; disulfide-linked. Detected in extracellular fluid as mature homodimer, and in complex with its propeptide. Interacts with ACVRL1, BMPR2 and ACVR2B with high affinity (in vitro). Identified in a complex with ACVRL1 and ACVR2B. Has ten times lower affinity for ACVR2A (in vitro). Interacts with ENG, forming a heterotetramer with a 2:2 stoichiometry. Can form a heteromeric complex with ENG and ACVRL1. Interacts with type I receptor ACVR1. Post-translationally, a reversible disulfide bond can be formed between the two subunits in the homodimer; this has no effect on GDF2 activity.

The protein localises to the secreted. Functionally, potent circulating inhibitor of angiogenesis. Signals through the type I activin receptor ACVRL1 but not other Alks. Signaling through SMAD1 in endothelial cells requires TGF-beta coreceptor endoglin/ENG. The chain is Growth/differentiation factor 2 (Gdf2) from Mus musculus (Mouse).